Consider the following 307-residue polypeptide: UDP-3-O-acyl-N-acetylglucosamine deacetylase (307 aa).

The Zn(2+) site is built by H80, H239, and D243. The active-site Proton donor is H266.

Belongs to the LpxC family. The cofactor is Zn(2+).

The catalysed reaction is a UDP-3-O-[(3R)-3-hydroxyacyl]-N-acetyl-alpha-D-glucosamine + H2O = a UDP-3-O-[(3R)-3-hydroxyacyl]-alpha-D-glucosamine + acetate. It participates in glycolipid biosynthesis; lipid IV(A) biosynthesis; lipid IV(A) from (3R)-3-hydroxytetradecanoyl-[acyl-carrier-protein] and UDP-N-acetyl-alpha-D-glucosamine: step 2/6. Catalyzes the hydrolysis of UDP-3-O-myristoyl-N-acetylglucosamine to form UDP-3-O-myristoylglucosamine and acetate, the committed step in lipid A biosynthesis. The polypeptide is UDP-3-O-acyl-N-acetylglucosamine deacetylase (Neisseria meningitidis serogroup C (strain 053442)).